We begin with the raw amino-acid sequence, 177 residues long: ATP synthase subunit delta (177 aa).

It belongs to the ATPase delta chain family. As to quaternary structure, F-type ATPases have 2 components, F(1) - the catalytic core - and F(0) - the membrane proton channel. F(1) has five subunits: alpha(3), beta(3), gamma(1), delta(1), epsilon(1). F(0) has three main subunits: a(1), b(2) and c(10-14). The alpha and beta chains form an alternating ring which encloses part of the gamma chain. F(1) is attached to F(0) by a central stalk formed by the gamma and epsilon chains, while a peripheral stalk is formed by the delta and b chains.

It localises to the cell inner membrane. In terms of biological role, f(1)F(0) ATP synthase produces ATP from ADP in the presence of a proton or sodium gradient. F-type ATPases consist of two structural domains, F(1) containing the extramembraneous catalytic core and F(0) containing the membrane proton channel, linked together by a central stalk and a peripheral stalk. During catalysis, ATP synthesis in the catalytic domain of F(1) is coupled via a rotary mechanism of the central stalk subunits to proton translocation. This protein is part of the stalk that links CF(0) to CF(1). It either transmits conformational changes from CF(0) to CF(1) or is implicated in proton conduction. This chain is ATP synthase subunit delta, found in Vibrio alginolyticus.